A 316-amino-acid chain; its full sequence is N-acetylmuramic acid 6-phosphate etherase (316 aa).

A disordered region spans residues 1 to 25 (MAVFDPDLQPSSDRGHLLTEQSNQR). The 164-residue stretch at 66–229 (VANRLRAGGR…STAVMVKLGK (164 aa)) folds into the SIS domain. Residue E94 is the Proton donor of the active site. E125 is a catalytic residue.

It belongs to the GCKR-like family. MurNAc-6-P etherase subfamily. As to quaternary structure, homodimer.

The enzyme catalyses N-acetyl-D-muramate 6-phosphate + H2O = N-acetyl-D-glucosamine 6-phosphate + (R)-lactate. It participates in amino-sugar metabolism; N-acetylmuramate degradation. Specifically catalyzes the cleavage of the D-lactyl ether substituent of MurNAc 6-phosphate, producing GlcNAc 6-phosphate and D-lactate. The sequence is that of N-acetylmuramic acid 6-phosphate etherase from Synechococcus sp. (strain CC9605).